Consider the following 382-residue polypeptide: S-adenosylmethionine synthase (382 aa).

His-14 contributes to the ATP binding site. Asp-16 lines the Mg(2+) pocket. Glu-42 contributes to the K(+) binding site. Glu-55 and Gln-91 together coordinate L-methionine. The flexible loop stretch occupies residues 91–101 (QSENIAMGVNL). ATP contacts are provided by residues 156-158 (DMK), 222-223 (KF), Asp-231, 237-238 (RK), Ala-254, and Lys-258. Position 231 (Asp-231) interacts with L-methionine. Residue Lys-262 participates in L-methionine binding.

The protein belongs to the AdoMet synthase family. Homotetramer; dimer of dimers. The cofactor is Mg(2+). It depends on K(+) as a cofactor.

The protein localises to the cytoplasm. It catalyses the reaction L-methionine + ATP + H2O = S-adenosyl-L-methionine + phosphate + diphosphate. It functions in the pathway amino-acid biosynthesis; S-adenosyl-L-methionine biosynthesis; S-adenosyl-L-methionine from L-methionine: step 1/1. Catalyzes the formation of S-adenosylmethionine (AdoMet) from methionine and ATP. The overall synthetic reaction is composed of two sequential steps, AdoMet formation and the subsequent tripolyphosphate hydrolysis which occurs prior to release of AdoMet from the enzyme. The sequence is that of S-adenosylmethionine synthase from Mycoplasmopsis synoviae (strain 53) (Mycoplasma synoviae).